Reading from the N-terminus, the 511-residue chain is Fas-activated serine/threonine kinase (511 aa).

The region spanning 439–497 (VVLMLRERWHFCRDGRVLLGSRALRERHLGLMGYQLLPLPFEELESQRGLPQLKSYLRQ) is the RAP domain.

The protein belongs to the FAST protein kinase family. Interacts with TIA1; the interactions leads to TIA1 phosphorylation. Interacts with TIAR. Autophosphorylated on serine/threonine residues. Activated by dephosphorylation.

It localises to the mitochondrion matrix. It catalyses the reaction L-seryl-[Fas-activated protein] + ATP = O-phospho-L-seryl-[Fas-activated protein] + ADP + H(+). The catalysed reaction is L-threonyl-[Fas-activated protein] + ATP = O-phospho-L-threonyl-[Fas-activated protein] + ADP + H(+). The enzyme catalyses L-seryl-[protein] + ATP = O-phospho-L-seryl-[protein] + ADP + H(+). It carries out the reaction L-threonyl-[protein] + ATP = O-phospho-L-threonyl-[protein] + ADP + H(+). Functionally, phosphorylates the splicing regulator TIA1, thereby promoting the inclusion of FAS exon 6, which leads to an mRNA encoding a pro-apoptotic form of the receptor. Required for the biogenesis of some mitochondrial-encoded mRNAs, specifically stabilizes ND6 (NADH dehydrogenase complex subunit 6) mRNA, and regulates its levels. The chain is Fas-activated serine/threonine kinase (Fastk) from Mus musculus (Mouse).